The following is a 365-amino-acid chain: Putative chalcone synthase (365 aa).

Cys-144 is an active-site residue.

The protein belongs to the thiolase-like superfamily. Chalcone/stilbene synthases family.

The enzyme catalyses (E)-4-coumaroyl-CoA + 3 malonyl-CoA + 3 H(+) = 2',4,4',6'-tetrahydroxychalcone + 3 CO2 + 4 CoA. The sequence is that of Putative chalcone synthase (bcsA) from Bacillus subtilis (strain 168).